The sequence spans 238 residues: tRNA (guanine-N(7)-)-methyltransferase (238 aa).

Glutamate 70, aspartate 95, aspartate 122, and aspartate 145 together coordinate S-adenosyl-L-methionine. Residue aspartate 145 is part of the active site. Residues lysine 149, aspartate 181, and 216-219 (TKFE) contribute to the substrate site.

Belongs to the class I-like SAM-binding methyltransferase superfamily. TrmB family.

It catalyses the reaction guanosine(46) in tRNA + S-adenosyl-L-methionine = N(7)-methylguanosine(46) in tRNA + S-adenosyl-L-homocysteine. The protein operates within tRNA modification; N(7)-methylguanine-tRNA biosynthesis. Catalyzes the formation of N(7)-methylguanine at position 46 (m7G46) in tRNA. This chain is tRNA (guanine-N(7)-)-methyltransferase, found in Neisseria gonorrhoeae (strain ATCC 700825 / FA 1090).